Consider the following 314-residue polypeptide: Caspase-like protein (314 aa).

It belongs to the peptidase C14A family.

Functionally, may be involved in viral replication. In Heliothis virescens ascovirus 3e (HvAV-3e), this protein is Caspase-like protein.